A 359-amino-acid chain; its full sequence is 2-amino-3-carboxymuconate-6-semialdehyde decarboxylase (359 aa).

Residues 1 to 13 (MENKETTTTTTTT) are compositionally biased toward low complexity. The segment at 1–21 (MENKETTTTTTTTNNGSDKKK) is disordered. Zn(2+)-binding residues include H29 and H31. R70 contributes to the substrate binding site. Positions 197 and 314 each coordinate Zn(2+).

This sequence belongs to the metallo-dependent hydrolases superfamily. ACMSD family. As to quaternary structure, monomer.

It catalyses the reaction 2-amino-3-carboxymuconate 6-semialdehyde + H(+) = 2-aminomuconate 6-semialdehyde + CO2. Its pathway is secondary metabolite metabolism; quinolate metabolism. Functionally, converts alpha-amino-beta-carboxymuconate-epsilon-semialdehyde (ACMS) to alpha-aminomuconate semialdehyde (AMS). This is 2-amino-3-carboxymuconate-6-semialdehyde decarboxylase (acmsd) from Dictyostelium discoideum (Social amoeba).